Here is a 241-residue protein sequence, read N- to C-terminus: Alkylated DNA repair protein ALKBH6 homolog (241 aa).

Positions 87-232 (AINHVLINEY…RVSLTCRLVP (146 aa)) constitute a Fe2OG dioxygenase domain. Residues His-105, Asp-107, and His-181 each coordinate Fe cation. 2-oxoglutarate is bound by residues Arg-223 and Arg-229.

The protein belongs to the alkB family. It depends on Fe(2+) as a cofactor.

It localises to the nucleus. Probable RNA demethylase that binds to both N6-methyladenosine-containing- (m(6)A) and C5-methylcytidine-containing- (m(5)C) RNAs, thus being a probable m(6)A and m(5)C eraser. Involved in responses to abscisic acid (ABA) via the modulation of the expression of ABA signaling-related genes (e.g. ABI3 and ABI4). Acts as a negative regulator during seed germination under abiotic stresses (e.g. salt, cold and ABA). Positive modulator of seedling growth and survival in response to drought and heat, but counteracts tolerance to salt. The chain is Alkylated DNA repair protein ALKBH6 homolog from Arabidopsis thaliana (Mouse-ear cress).